A 222-amino-acid polypeptide reads, in one-letter code: Large ribosomal subunit protein mL64 (222 aa).

Disordered stretches follow at residues 21–47 (RSRS…NLLT) and 186–222 (QRKR…EPSS). Positions 98 to 207 (TMQESLRLQQ…KKEARIAAMA (110 aa)) form a coiled coil. The Nuclear localization signal signature appears at 184-200 (KQQRKRLKEERQRQKKE). Basic and acidic residues predominate over residues 186–202 (QRKRLKEERQRQKKEAR). Positions 203–215 (IAAMASAEAQDSA) are enriched in low complexity.

It belongs to the mitochondrion-specific ribosomal protein mL64 family. In terms of assembly, component of the mitochondrial ribosome large subunit (39S) which comprises a 16S rRNA and about 50 distinct proteins. Interacts with GADD45A, GADD45B and GADD45G. Interacts with NR4A1 via the NR4A1 AB domain. Interacts with ATAD3A and ATAD3B.

The protein resides in the mitochondrion. Its subcellular location is the nucleus. Its function is as follows. Acts as a negative regulator of G1 to S cell cycle phase progression by inhibiting cyclin-dependent kinases. Inhibitory effects are additive with GADD45 proteins but also occur in the absence of GADD45 proteins. Acts as a repressor of the orphan nuclear receptor NR4A1 by inhibiting AB domain-mediated transcriptional activity. May be involved in the hormone-mediated regulation of NR4A1 transcriptional activity. May play a role in mitochondrial protein synthesis. In Mus musculus (Mouse), this protein is Large ribosomal subunit protein mL64 (Gadd45gip1).